Consider the following 243-residue polypeptide: Terpene cyclase nodB (243 aa).

Transmembrane regions (helical) follow at residues 19–39 (ISDI…AGMI), 50–70 (MAPL…LIYP), and 75–95 (IEQG…YTAI). Asn111 carries N-linked (GlcNAc...) asparagine glycosylation. 4 consecutive transmembrane segments (helical) span residues 112–132 (ITLI…ALAA), 134–154 (IGPA…LSVG), 169–189 (SYTL…FAIL), and 205–225 (LVLW…ICLW).

It belongs to the paxB family.

The protein resides in the membrane. It functions in the pathway secondary metabolite biosynthesis. In terms of biological role, terpene cyclase; part of the gene cluster that mediates the biosynthesis of the indole diterpenes nodulisporic acids (NA). Nodulisporic acid A (NAA) and its chemically modified derivatives are of particular significance because of their highly potent insecticidal activity against blood-feeding arthropods and lack of observable adverse effects on mammals, in particular the tremogenicity associated with the paspaline-derived IDTs is not observed. The geranylgeranyl diphosphate (GGPP) synthase ggs1, localized outside of the cluster, is proposed to catalyze the first step in nodulisporic acid biosynthesis via conversion of farnesyl pyrophosphate and isopentyl pyrophosphate into geranylgeranyl pyrophosphate (GGPP). Condensation of indole-3-glycerol phosphate with GGPP by the prenyl transferase nodC then forms 3-geranylgeranylindole (3-GGI). Epoxidation by the FAD-dependent monooxygenase nodM leads to a single-epoxidized-GGI that is substrate of the terpene cyclase nodB for cyclization to yield emindole SB. The terminal methyl carbon, C28, of emindole SB is then oxidized by the cytochrome P450 monooxygenase nodW to produce nodulisporic acid F (NAF), the pentacyclic core of NAA. NAF is converted to nodulisporic acid E (NAE) via prenylation. This step is probably performed by one of the indole diterpene prenyltransferases nodD1 or nodD2. Several oxidation steps performed by the FAD-linked oxidoreductase nodO and one of the cytochrome P450 monooxygenase nodR, nodX or nodZ further convert NAE to nodulisporic acid D (NAD). NAD is substrate of cytochrome P450 monooxygenase nodJ to produce the precursor of nodulisporic acid C (NAC), converted to NAC by one of the indole diterpene prenyltransferases nodD1 or nodD2. The FAD-dependent monooxygenase nodY2 then oxidizes NAC to nodulisporic acid B (NAB). Finally NAB is converted to NAA by one of the cytochrome P450 monooxygenases nodR, nodX or nodZ. In Hypoxylon pulicicidum, this protein is Terpene cyclase nodB.